The primary structure comprises 50 residues: MLTKYALAAVIVLCLTVLGFTLLVGDSLCEFTVKERNIEFKAVLAYEPKK.

The helical transmembrane segment at 5-25 (YALAAVIVLCLTVLGFTLLVG) threads the bilayer.

It belongs to the Hok/Gef family.

It localises to the cell inner membrane. In terms of biological role, toxic component of a type I toxin-antitoxin (TA) system; if it expressed it could be neutralized by antisense antitoxin RNA SokE. The sequence is that of Toxic protein HokE from Escherichia coli (strain K12).